The primary structure comprises 434 residues: MTTQVVNVIGAGLAGSEAAYQIAKRGVQVRLYEMRPVRQTPAHHTDKFAELVCSNSLRANTLTNAVGVIKEEMRLMDSVIIRAADECSVPAGGALAVDRHEFAAKVTEYVKNHPNVTVVNEEITEIPEGPTVIATGPLTSPDLSAQLKELTGEDYFYFYDAAAPIVEKDSIDMNKVYLKSRYDKGEAAYLNCPMTEEEFDRFYEALIAAETVPLKEFEKEIFFEGCMPVEVMASRGRQTLVFGPMKPVGLEDPKTGKTPYAVVQLRQDDAAGTLYNIVGFQTHLKWGPQKEVLQLIPGLENAEIVRYGVMHRNTFINSPNLLRPTYQYKQRDDLFFAGQMTGVEGYVESAASGLLAGINAARLVKGEEPVVLPPVTAMGSMANYITATNAKNFQPMNANFGLFAPLEKKIKKKAERNEAYATRALETIRNFVNI.

10–15 (GAGLAG) is a binding site for FAD.

This sequence belongs to the MnmG family. TrmFO subfamily. Requires FAD as cofactor.

It is found in the cytoplasm. The enzyme catalyses uridine(54) in tRNA + (6R)-5,10-methylene-5,6,7,8-tetrahydrofolate + NADH + H(+) = 5-methyluridine(54) in tRNA + (6S)-5,6,7,8-tetrahydrofolate + NAD(+). The catalysed reaction is uridine(54) in tRNA + (6R)-5,10-methylene-5,6,7,8-tetrahydrofolate + NADPH + H(+) = 5-methyluridine(54) in tRNA + (6S)-5,6,7,8-tetrahydrofolate + NADP(+). In terms of biological role, catalyzes the folate-dependent formation of 5-methyl-uridine at position 54 (M-5-U54) in all tRNAs. This Bacillus cereus (strain ATCC 10987 / NRS 248) protein is Methylenetetrahydrofolate--tRNA-(uracil-5-)-methyltransferase TrmFO.